The following is a 304-amino-acid chain: Small glutamine-rich tetratricopeptide repeat-containing protein beta (304 aa).

4 TPR repeats span residues Leu15–Asp49, Ala85–Asn118, Val120–Tyr152, and Ser153–Asn186. Lys131 carries the post-translational modification N6-acetyllysine. 3 positions are modified to phosphoserine: Ser293, Ser295, and Ser297.

Belongs to the SGT family. As to quaternary structure, homooligomerize.

In terms of biological role, co-chaperone that binds directly to HSC70 and HSP70 and regulates their ATPase activity. This Mus musculus (Mouse) protein is Small glutamine-rich tetratricopeptide repeat-containing protein beta (Sgtb).